A 455-amino-acid chain; its full sequence is Golgi pH regulator (455 aa).

Helical transmembrane passes span 5-25 (IDSSIMITSQILFFGFGWLFF), 46-66 (VTFAFSCTMFELIIFEILGVL), 79-99 (LCVILLILVFMVPFYIGYFIV), 114-134 (CLLWLTFMYFFWKLGDPFPIL), and 150-170 (VGVIGVTLMALLSGFGAVNCP). N-linked (GlcNAc...) asparagine glycans are attached at residues asparagine 180 and asparagine 243. A run of 4 helical transmembrane segments spans residues 290–310 (GYFFSIYCVWKIFMATINIVF), 343–363 (ISFILVGIIIVTSIRGLLITL), 378–398 (VIVLLLAQIMGMYFVSSVLLI), and 425–445 (WFDVIFLVSALSSILFLYLAH).

Belongs to the Golgi pH regulator (TC 1.A.38) family. As to quaternary structure, homotrimer. Interacts with RABL3; the interaction stabilizes GPR89A.

The protein localises to the golgi apparatus membrane. It catalyses the reaction iodide(out) = iodide(in). The enzyme catalyses chloride(in) = chloride(out). The catalysed reaction is bromide(in) = bromide(out). It carries out the reaction fluoride(in) = fluoride(out). Voltage-gated channel that enables the transfer of monoatomic anions such as iodide, chloride, bromide and fluoride which may function in counter-ion conductance and participates in Golgi acidification. Plays a role in lymphocyte development, probably by acting as a RABL3 effector in hematopoietic cells. The polypeptide is Golgi pH regulator (Bos taurus (Bovine)).